A 241-amino-acid chain; its full sequence is Venom nerve growth factor 2 (241 aa).

An N-terminal signal peptide occupies residues 1–18 (MSMLCYTLITAFLIGIWA). The propeptide occupies 19–125 (APKSEDNVPL…SLNRNIRAKR (107 aa)). Residues 47–67 (GLKTSRNTDQRHPAPQKAEDQ) are disordered. 3 disulfides stabilise this stretch: C139–C203, C181–C231, and C191–C233.

Belongs to the NGF-beta family. Homodimer; non-covalently linked. As to expression, expressed by the venom gland.

It is found in the secreted. In terms of biological role, nerve growth factor is important for the development and maintenance of the sympathetic and sensory nervous systems. It stimulates division and differentiation of sympathetic and embryonic sensory neurons as well as basal forebrain cholinergic neurons in the brain. Its relevance in the snake venom is not clear. However, it has been shown to inhibit metalloproteinase-dependent proteolysis of platelet glycoprotein Ib alpha, suggesting a metalloproteinase inhibition to prevent metalloprotease autodigestion and/or protection against prey proteases. Binds a lipid between the two protein chains in the homodimer. The lipid-bound form promotes histamine relase from mouse mast cells, contrary to the lipid-free form. The polypeptide is Venom nerve growth factor 2 (Naja sputatrix (Malayan spitting cobra)).